The primary structure comprises 368 residues: CST complex subunit STN1 (368 aa).

Residues 2 to 192 are interaction with CTC1; sequence AVSLGDDDAD…KCYDQPFKMP (191 aa). Residues 58–162 constitute a DNA-binding region (OB); sequence VDVLGIVVYK…EIKATSFYKV (105 aa). 2 winged helix-turn-helix (wHTH) regions span residues 201-295 and 296-368; these read AGGS…NVTE and QDKD…YIVL.

This sequence belongs to the CTC1 family. In terms of assembly, component of the CST complex.

Its subcellular location is the nucleus. The protein resides in the chromosome. It is found in the telomere. In terms of biological role, component of the CST complex proposed to act as a specialized replication factor promoting DNA replication under conditions of replication stress or natural replication barriers such as the telomere duplex. The CST complex binds single-stranded DNA with high affinity in a sequence-independent manner, while isolated subunits bind DNA with low affinity by themselves. Initially the CST complex has been proposed to protect telomeres from DNA degradation. However, the CST complex has been shown to be involved in several aspects of telomere replication. The sequence is that of CST complex subunit STN1 from Danio rerio (Zebrafish).